Consider the following 319-residue polypeptide: Cell division protein FtsN (319 aa).

The segment at 1-30 is disordered; that stretch reads MAQRDYVRRSQPAPSRRKKSTSRKKQRNLP. The Cytoplasmic portion of the chain corresponds to 1–33; it reads MAQRDYVRRSQPAPSRRKKSTSRKKQRNLPAVS. A mediates interaction with FtsA region spans residues 4–6; it reads RDY. A compositionally biased stretch (basic residues) spans 15 to 27; it reads SRRKKSTSRKKQR. The helical transmembrane segment at 34–54 threads the bilayer; the sequence is PAMVAIAAAVLVTFIGGLYFI. Residues 55–319 are Periplasmic-facing; that stretch reads THHKKEESET…TNCIRLAAGG (265 aa). 2 disordered regions span residues 60 to 79 and 89 to 113; these read EESE…PPKP and LESR…TPEQ. 4 consecutive repeat copies span residues 115–120, 145–150, 197–200, and 220–223. The tract at residues 115–150 is 2 X 6 AA repeats; that stretch reads TPEQRQLLEQMQADMRQQPTQLVEVPWNEQTPEQRQ. The tract at residues 140–245 is disordered; the sequence is PWNEQTPEQR…PKPTAEKKDE (106 aa). Residues 143 to 171 are compositionally biased toward low complexity; the sequence is EQTPEQRQQTLQRQRQAQQLAEQQRLAQQ. A compositionally biased stretch (polar residues) spans 172 to 221; sequence SRTTEQSWQQQTRTSQAAPVQAQPRQSKPASSQQPYQDLLQTPAHTTAQS. Positions 197–223 are 2 X 4 AA repeats; the sequence is QSKPASSQQPYQDLLQTPAHTTAQSKP. Low complexity predominate over residues 222-238; the sequence is KPQQAAPVARAADAPKP. An SPOR domain is found at 242–316; the sequence is KKDERRWMVQ…AGHTNCIRLA (75 aa). C252 and C312 are oxidised to a cystine.

Belongs to the FtsN family. In terms of assembly, interacts with FtsA via its N-terminal cytoplasmic domain. Interacts with ZapA, FtsQ, FtsW and FtsI.

It is found in the cell inner membrane. In terms of biological role, essential cell division protein that activates septal peptidoglycan synthesis and constriction of the cell. Acts on both sides of the membrane, via interaction with FtsA in the cytoplasm and interaction with the FtsQBL complex in the periplasm. These interactions may induce a conformational switch in both FtsA and FtsQBL, leading to septal peptidoglycan synthesis by FtsI and associated synthases. Required for full FtsI activity. Required for recruitment of AmiC to the septal ring. The polypeptide is Cell division protein FtsN (Escherichia coli (strain K12)).